The following is a 256-amino-acid chain: Small ribosomal subunit protein uS2 (256 aa).

The protein belongs to the universal ribosomal protein uS2 family.

This Rhizobium rhizogenes (strain K84 / ATCC BAA-868) (Agrobacterium radiobacter) protein is Small ribosomal subunit protein uS2.